We begin with the raw amino-acid sequence, 459 residues long: Elongation factor 1-alpha 2 (459 aa).

Residues 5–242 (KTHINIVVIG…DCIIPPQRPT (238 aa)) enclose the tr-type G domain. A G1 region spans residues 14–21 (GHVDSGKS). A G2 region spans residues 70-74 (GITID). The interval 91-94 (DAPG) is G3. The segment at 153–156 (NKMD) is G4. The G5 stretch occupies residues 194–196 (SGF). Glutamate 301 and glutamate 374 each carry 5-glutamyl glycerylphosphorylethanolamine.

It belongs to the TRAFAC class translation factor GTPase superfamily. Classic translation factor GTPase family. EF-Tu/EF-1A subfamily.

The protein resides in the cytoplasm. This protein promotes the GTP-dependent binding of aminoacyl-tRNA to the A-site of ribosomes during protein biosynthesis. This is Elongation factor 1-alpha 2 (eft-2) from Oscheius tipulae.